The chain runs to 487 residues: 6-phosphogluconate dehydrogenase, decarboxylating 3, chloroplastic (487 aa).

Met1 bears the N-acetylmethionine mark. Residues 13 to 18 (GLAVMG), 36 to 38 (NRT), 80 to 82 (VKA), and Asn108 each bind NADP(+). Substrate contacts are provided by residues Asn108 and 134–136 (SGG). Residue Lys188 is the Proton acceptor of the active site. Substrate is bound at residue 191 to 192 (HN). The Proton donor role is filled by Glu195. Substrate-binding residues include Tyr196, Lys266, Arg293, Arg458, and His464.

The protein belongs to the 6-phosphogluconate dehydrogenase family. In terms of assembly, forms homodimer. Forms heterodimers with PGD1 or PGD2.

The protein localises to the plastid. The protein resides in the chloroplast. It localises to the cytoplasm. Its subcellular location is the cytosol. It catalyses the reaction 6-phospho-D-gluconate + NADP(+) = D-ribulose 5-phosphate + CO2 + NADPH. It functions in the pathway carbohydrate degradation; pentose phosphate pathway; D-ribulose 5-phosphate from D-glucose 6-phosphate (oxidative stage): step 3/3. In terms of biological role, catalyzes the oxidative decarboxylation of 6-phosphogluconate to ribulose 5-phosphate and CO(2), with concomitant reduction of NADP to NADPH. This Arabidopsis thaliana (Mouse-ear cress) protein is 6-phosphogluconate dehydrogenase, decarboxylating 3, chloroplastic.